The following is a 727-amino-acid chain: Anaphase-promoting complex subunit 5 (727 aa).

Serine 180 carries the phosphoserine modification. TPR repeat units follow at residues glutamine 194–aspartate 234, phenylalanine 235–leucine 285, arginine 286–histidine 322, valine 323–proline 359, arginine 360–isoleucine 390, aspartate 391–phenylalanine 438, alanine 439–asparagine 472, serine 473–glycine 512, isoleucine 513–valine 552, isoleucine 553–alanine 592, serine 593–lysine 632, glycine 633–glutamate 668, and alanine 669–valine 708. A Phosphothreonine modification is found at threonine 217.

Belongs to the APC5 family. As to quaternary structure, the mammalian APC/C is composed at least of 14 distinct subunits ANAPC1, ANAPC2, CDC27/APC3, ANAPC4, ANAPC5, CDC16/APC6, ANAPC7, CDC23/APC8, ANAPC10, ANAPC11, CDC26/APC12, ANAPC13, ANAPC15 and ANAPC16 that assemble into a complex of at least 19 chains with a combined molecular mass of around 1.2 MDa; APC/C interacts with FZR1 and FBXO5.

It localises to the nucleus. It is found in the cytoplasm. The protein localises to the cytoskeleton. Its subcellular location is the spindle. It functions in the pathway protein modification; protein ubiquitination. Its function is as follows. Component of the anaphase promoting complex/cyclosome (APC/C), a cell cycle-regulated E3 ubiquitin ligase that controls progression through mitosis and the G1 phase of the cell cycle. The APC/C complex acts by mediating ubiquitination and subsequent degradation of target proteins: it mainly mediates the formation of 'Lys-11'-linked polyubiquitin chains and, to a lower extent, the formation of 'Lys-48'- and 'Lys-63'-linked polyubiquitin chains. The APC/C complex catalyzes assembly of branched 'Lys-11'-/'Lys-48'-linked branched ubiquitin chains on target proteins. This chain is Anaphase-promoting complex subunit 5 (Anapc5), found in Rattus norvegicus (Rat).